Here is a 405-residue protein sequence, read N- to C-terminus: K(+)/H(+) antiporter subunit KhtU (405 aa).

Transmembrane regions (helical) follow at residues 3–23 (HLVF…VIAN), 29–49 (IIPF…KMGI), 60–80 (IIEF…GLEF), 85–105 (LIKS…INFS), 108–128 (LLYG…AGVI), 153–173 (LILG…SVVS), 183–203 (VGSA…FFIA), 222–242 (VFII…ETIH), 268–288 (LVVP…GLSI), 297–317 (VWLA…AGMV), 332–352 (IGLT…LGIA), and 357–377 (ATLK…GPLV).

This sequence belongs to the monovalent cation:proton antiporter 2 (CPA2) transporter (TC 2.A.37) family. In terms of assembly, the transporter is composed of the integral membrane protein KhtU and the regulatory protein KhtT.

The protein localises to the cell membrane. With respect to regulation, potassium antiport activity requires the presence of KhtT. Activity is also modulated by KhtS. Has higher activity at alkaline pH. Potassium/proton antiporter that mediates the efflux of potassium ions from the cell. Can also mediate rubidium/proton antiport, but has no permeability for sodium or lithium ions. In the absence of KhtT, does not have antiport activity, but can catalyze potassium efflux. Involved in protection of the cell from methylglyoxal, a toxic by-product of glycolysis, via activation by S-lactoyl-BSH of the antiporter activity, leading to cytoplasmic acidification and methylglyoxal resistance. In Bacillus subtilis (strain 168), this protein is K(+)/H(+) antiporter subunit KhtU.